A 557-amino-acid polypeptide reads, in one-letter code: Protein Red (557 aa).

Residues 1 to 90 are disordered; the sequence is MPERDSEPFS…YAKLRQQEIE (90 aa). Residues 16-25 are compositionally biased toward basic and acidic residues; the sequence is DGHDVDDPHS. The segment covering 42–53 has biased composition (low complexity); sequence TPRAAPTSAPPS. N6-acetyllysine is present on residues K98 and K137. A Glycyl lysine isopeptide (Lys-Gly) (interchain with G-Cter in SUMO2) cross-link involves residue K151. The segment at 181-205 is disordered; that stretch reads KEKEEEELMEKPQKETKKDEDPENK. S287 is modified (phosphoserine). Basic residues predominate over residues 294 to 303; it reads RNKKLKKKDK. Residues 294–402 are disordered; the sequence is RNKKLKKKDK…PMDVDKGPGS (109 aa). Basic and acidic residues predominate over residues 304–313; the sequence is GKLEEKKPPE. Glycyl lysine isopeptide (Lys-Gly) (interchain with G-Cter in SUMO2) cross-links involve residues K310 and K331. Basic and acidic residues predominate over residues 332–398; sequence TPRDKERERY…VDDEPMDVDK (67 aa). Tandem repeats lie at residues 342–343, 344–345, 346–347, 348–349, 350–351, 352–353, 354–355, 356–357, 358–359, 360–361, 362–363, 364–365, 366–367, 368–369, 370–371, 372–373, and 374–375. The interval 342 to 375 is 17 X 2 AA tandem repeats of R-[ED]; the sequence is RERERDRERDRDRERDRERDRERERERDRERERE. Residues K386, K388, K404, and K408 each participate in a glycyl lysine isopeptide (Lys-Gly) (interchain with G-Cter in SUMO2) cross-link. A phosphoserine mark is found at S417 and S460. T485 carries the post-translational modification Phosphothreonine. Residues K496, K501, and K509 each participate in a glycyl lysine isopeptide (Lys-Gly) (interchain with G-Cter in SUMO2) cross-link. At S536 the chain carries Phosphoserine. Residues K541, K543, and K553 each participate in a glycyl lysine isopeptide (Lys-Gly) (interchain with G-Cter in SUMO2) cross-link.

Belongs to the RED family. As to quaternary structure, component of the spliceosome B complex. Interacts with SMU1. Interacts with MAD1L1. May interact with DHX15. Ubiquitous.

Its subcellular location is the nucleus. It is found in the nucleoplasm. The protein localises to the chromosome. The protein resides in the cytoplasm. It localises to the cytoskeleton. Its subcellular location is the spindle pole. Involved in pre-mRNA splicing as a component of the spliceosome. Auxiliary spliceosomal protein that regulates selection of alternative splice sites in a small set of target pre-mRNA species. Required for normal mitotic cell cycle progression. Recruits MAD1L1 and MAD2L1 to kinetochores, and is required to trigger the spindle assembly checkpoint. Required for normal accumulation of SMU1. This chain is Protein Red (Ik), found in Mus musculus (Mouse).